The sequence spans 255 residues: Type III pantothenate kinase (255 aa).

6 to 13 contributes to the ATP binding site; sequence DVGNTHIV. Substrate-binding positions include tyrosine 100 and 107–110; that span reads GADR. Aspartate 109 acts as the Proton acceptor in catalysis. Aspartate 129 contributes to the K(+) binding site. Threonine 132 is an ATP binding site. Threonine 184 lines the substrate pocket.

It belongs to the type III pantothenate kinase family. As to quaternary structure, homodimer. The cofactor is NH4(+). K(+) serves as cofactor.

The protein resides in the cytoplasm. The catalysed reaction is (R)-pantothenate + ATP = (R)-4'-phosphopantothenate + ADP + H(+). Its pathway is cofactor biosynthesis; coenzyme A biosynthesis; CoA from (R)-pantothenate: step 1/5. Catalyzes the phosphorylation of pantothenate (Pan), the first step in CoA biosynthesis. This chain is Type III pantothenate kinase, found in Ruminiclostridium cellulolyticum (strain ATCC 35319 / DSM 5812 / JCM 6584 / H10) (Clostridium cellulolyticum).